We begin with the raw amino-acid sequence, 276 residues long: Mitochondrial outer membrane protein porin of 36 kDa (276 aa).

It belongs to the eukaryotic mitochondrial porin (TC 1.B.8.1) family.

The protein resides in the mitochondrion outer membrane. Functionally, forms a channel through the cell membrane that allows diffusion of small hydrophilic molecules. The channel adopts an open conformation at low or zero membrane potential and a closed conformation at potentials above 30-40 mV. The open state has a weak anion selectivity whereas the closed state is cation-selective. In Solanum tuberosum (Potato), this protein is Mitochondrial outer membrane protein porin of 36 kDa.